Here is a 339-residue protein sequence, read N- to C-terminus: Phenylalanine--tRNA ligase alpha subunit (339 aa).

Glu-254 provides a ligand contact to Mg(2+).

Belongs to the class-II aminoacyl-tRNA synthetase family. Phe-tRNA synthetase alpha subunit type 1 subfamily. As to quaternary structure, tetramer of two alpha and two beta subunits. It depends on Mg(2+) as a cofactor.

It localises to the cytoplasm. The catalysed reaction is tRNA(Phe) + L-phenylalanine + ATP = L-phenylalanyl-tRNA(Phe) + AMP + diphosphate + H(+). In Clostridium kluyveri (strain ATCC 8527 / DSM 555 / NBRC 12016 / NCIMB 10680 / K1), this protein is Phenylalanine--tRNA ligase alpha subunit.